The following is a 514-amino-acid chain: MGSLDTNPTAFSAFPAGEGETFQPLNADDVRSYLHKAVDFISDYYKSVESMPVLPNVKPGYLQDELRASPPTYSAPFDVTMKELRSSVVPGMTHWASPNFFAFFPSTNSAAAIAGDLIASAMNTVGFTWQASPAATEMEVLALDWLAQMLNLPTSFMNRTGEGRGTGGGVILGTTSEAMLVTLVAARDAALRRSGSDGVAGLHRLAVYAADQTHSTFFKACRLAGFDPANIRSIPTGAETDYGLDPARLLEAMQADADAGLVPTYVCATVGTTSSNAVDPVGAVADVAARFAAWVHVDAAYAGSACICPEFRHHLDGVERVDSISMSPHKWLMTCLDCTCLYVRDTHRLTGSLETNPEYLKNHASDSGEVTDLKDMQVGVGRRFRGLKLWMVMRTYGVAKLQEHIRSDVAMAKVFEDLVRGDDRFEVVVPRNFALVCFRIRAGAGAAAATEEDADEANRELMERLNKTGKAYVAHTVVGGRFVLRFAVGSSLQEEHHVRSAWELIKKTTTEMMN.

Phe-104 contributes to the serotonin binding site. Thr-175 and Ser-176 together coordinate pyridoxal 5'-phosphate. His-214 contributes to the serotonin binding site. Thr-273 is a binding site for pyridoxal 5'-phosphate. Lys-330 is modified (N6-(pyridoxal phosphate)lysine). The Proton donor role is filled by Tyr-359. Residues Val-380 and Gly-381 each contribute to the pyridoxal 5'-phosphate site.

The protein belongs to the group II decarboxylase family. In terms of assembly, forms homodimers. Pyridoxal 5'-phosphate serves as cofactor.

It catalyses the reaction L-tryptophan + H(+) = tryptamine + CO2. The catalysed reaction is 5-hydroxy-L-tryptophan + H(+) = serotonin + CO2. In terms of biological role, involved in serotonin biosynthesis. Catalyzes the decarboxylation of L-tryptophan to produce tryptamine, which is converted to serotonin by tryptamine 5-hydroxylase. May play a major role in serotonin biosynthesis during senescence. Accumulation of serotonin attenuates leaf senescence. Catalyzes the decarboxylation of 5-hydroxy-L-tryptophan to produce serotonin. The chain is Tryptophan decarboxylase 1 from Oryza sativa subsp. japonica (Rice).